Consider the following 151-residue polypeptide: Glycosylation-dependent cell adhesion molecule 1 (151 aa).

Residues 1-19 (MKFFTVLLFVSLAATSLAL) form the signal peptide. The segment at 29-123 (MKTQPTDAIP…ENLTKSSQTV (95 aa)) is disordered. Over residues 42–52 (STPTSYTSEES) the composition is skewed to low complexity. A compositionally biased stretch (basic and acidic residues) spans 53-71 (TSSKDLSKEPSIFREELIS). Phosphoserine occurs at positions 54, 59, 63, and 71. Positions 103-114 (RPTTSAATTSEE) are enriched in low complexity. Asn-115 is a glycosylation site (N-linked (GlcNAc...) asparagine).

It belongs to the PP3/GlyCAM-1 family. Post-translationally, extensively O-glycosylated. Lymph nodes. Associated with the lumenal surface of the high endothelial venules of peripheral lymph nodes.

The protein resides in the cell membrane. In terms of biological role, adhesion molecule that accomplishes cell binding by presenting carbohydrate(s) to the lectin domain of L-selectin. This chain is Glycosylation-dependent cell adhesion molecule 1 (Glycam1), found in Mus musculus (Mouse).